Consider the following 466-residue polypeptide: Asparagine--tRNA ligase (466 aa).

Belongs to the class-II aminoacyl-tRNA synthetase family. As to quaternary structure, homodimer.

The protein localises to the cytoplasm. The enzyme catalyses tRNA(Asn) + L-asparagine + ATP = L-asparaginyl-tRNA(Asn) + AMP + diphosphate + H(+). The protein is Asparagine--tRNA ligase of Buchnera aphidicola subsp. Acyrthosiphon pisum (strain APS) (Acyrthosiphon pisum symbiotic bacterium).